Reading from the N-terminus, the 336-residue chain is Tetraacyldisaccharide 4'-kinase (336 aa).

ATP is bound at residue Thr60–Thr67.

It belongs to the LpxK family.

It catalyses the reaction a lipid A disaccharide + ATP = a lipid IVA + ADP + H(+). Its pathway is glycolipid biosynthesis; lipid IV(A) biosynthesis; lipid IV(A) from (3R)-3-hydroxytetradecanoyl-[acyl-carrier-protein] and UDP-N-acetyl-alpha-D-glucosamine: step 6/6. In terms of biological role, transfers the gamma-phosphate of ATP to the 4'-position of a tetraacyldisaccharide 1-phosphate intermediate (termed DS-1-P) to form tetraacyldisaccharide 1,4'-bis-phosphate (lipid IVA). The polypeptide is Tetraacyldisaccharide 4'-kinase (Pseudomonas putida (strain W619)).